The sequence spans 124 residues: Ribonuclease pancreatic (124 aa).

Basic and acidic residues predominate over residues 1–13 (KESAAAKFERQHM). Positions 1 to 24 (KESAAAKFERQHMDSSTSSASSSN) are disordered. Lys7 and Arg10 together coordinate substrate. His12 acts as the Proton acceptor in catalysis. 4 cysteine pairs are disulfide-bonded: Cys26–Cys84, Cys40–Cys95, Cys58–Cys110, and Cys65–Cys72. Residue Asn34 is glycosylated (N-linked (GlcNAc...) asparagine; partial). Residues 41–45 (KPVNT), Lys66, and Arg85 contribute to the substrate site. His119 serves as the catalytic Proton donor.

Belongs to the pancreatic ribonuclease family. Monomer. Interacts with and forms tight 1:1 complexes with RNH1. Dimerization of two such complexes may occur. Interaction with RNH1 inhibits this protein. Pancreas.

It is found in the secreted. It carries out the reaction an [RNA] containing cytidine + H2O = an [RNA]-3'-cytidine-3'-phosphate + a 5'-hydroxy-ribonucleotide-3'-[RNA].. The catalysed reaction is an [RNA] containing uridine + H2O = an [RNA]-3'-uridine-3'-phosphate + a 5'-hydroxy-ribonucleotide-3'-[RNA].. Endonuclease that catalyzes the cleavage of RNA on the 3' side of pyrimidine nucleotides. Acts on single-stranded and double-stranded RNA. This is Ribonuclease pancreatic (RNASE1) from Ovis aries (Sheep).